Here is a 29-residue protein sequence, read N- to C-terminus: Cyclotide mden-B (29 aa).

Positions 1–29 (GLPICGETCFTGKCYTPGCTCSYPICKKN) form a cross-link, cyclopeptide (Gly-Asn). Intrachain disulfides connect cysteine 5–cysteine 19, cysteine 9–cysteine 21, and cysteine 14–cysteine 26.

Belongs to the cyclotide family. Moebius subfamily. This is a cyclic peptide.

In terms of biological role, probably participates in a plant defense mechanism. In Melicytus dentatus (Tree violet), this protein is Cyclotide mden-B.